Here is a 520-residue protein sequence, read N- to C-terminus: Cyclin-L2 (520 aa).

An N-acetylalanine modification is found at Ala-2. Cyclin-like regions lie at residues 83–185 (ELIQ…RVLK) and 198–282 (KIIV…KILQ). Residues 316-520 (LPGGTQVLDG…DHPGHSRHRR (205 aa)) form a disordered region. Residues Ser-330, Ser-338, Ser-348, and Ser-351 each carry the phosphoserine modification. A compositionally biased stretch (basic and acidic residues) spans 357–367 (RRLEGAKKAKA). Ser-369 carries the post-translational modification Phosphoserine. The segment covering 376–390 (KGRESRSRSRSREQS) has biased composition (basic and acidic residues). The tract at residues 385–423 (RSREQSYSRSPSRSASPKRRKSDSGSTSGGSKSQSRSRS) is RS. Positions 408-436 (SGSTSGGSKSQSRSRSRSDSPPRQAPRSA) are enriched in low complexity. Basic and acidic residues predominate over residues 441–454 (SEIRGSRKSKDCKY). Over residues 456 to 471 (QKPHKSRSRSSSRSRS) the composition is skewed to basic residues. Basic and acidic residues-rich tracts occupy residues 472 to 481 (RSRERADNPG) and 489 to 514 (YYRD…DHPG).

It belongs to the cyclin family. Cyclin L subfamily. As to quaternary structure, interacts with CDK11A, CDK11B, CDK12, CDK13 and POLR2A, the hyperphosphorylated C-terminal domain (CTD) of RNA polymerase II. May form a ternary complex with CDK11B and casein kinase II (CKII). Interacts with pre-mRNA-splicing factors, including at least SRSF1, SRSF2 AND SRSF7/SLU7. Widely expressed.

It localises to the nucleus speckle. Its subcellular location is the nucleus. It is found in the nucleoplasm. Involved in pre-mRNA splicing. May induce cell death, possibly by acting on the transcription and RNA processing of apoptosis-related factors. This is Cyclin-L2 (CCNL2) from Homo sapiens (Human).